We begin with the raw amino-acid sequence, 858 residues long: DNA mismatch repair protein MutS (858 aa).

618-625 (GPNMGGKS) provides a ligand contact to ATP.

Belongs to the DNA mismatch repair MutS family.

This protein is involved in the repair of mismatches in DNA. It is possible that it carries out the mismatch recognition step. This protein has a weak ATPase activity. The protein is DNA mismatch repair protein MutS of Shewanella woodyi (strain ATCC 51908 / MS32).